The sequence spans 494 residues: Putative bifunctional dihydrofolate reductase-thymidylate synthase (494 aa).

The region spanning 1–167 (MGIGKDGTLP…IKHSFISFVR (167 aa)) is the DHFR domain. 2 to 8 (GIGKDGT) is a binding site for NADP(+). Position 16 (Asp-16) interacts with substrate. NADP(+)-binding positions include 40–42 (RKT) and 61–64 (LTRS). Ile-103 is a substrate binding site. Position 104–111 (104–111 (GGGEILRQ)) interacts with NADP(+). Substrate is bound at residue Thr-124. The thymidylate synthase stretch occupies residues 170-494 (KSIAEANDSS…HHKIEMKMAV (325 aa)). Arg-231 contacts dUMP. Cys-376 is a catalytic residue. DUMP is bound by residues His-377, 395 to 399 (QRSAD), Asn-407, and 437 to 439 (HVY).

It in the N-terminal section; belongs to the dihydrofolate reductase family. The protein in the C-terminal section; belongs to the thymidylate synthase family.

It carries out the reaction (6S)-5,6,7,8-tetrahydrofolate + NADP(+) = 7,8-dihydrofolate + NADPH + H(+). The enzyme catalyses dUMP + (6R)-5,10-methylene-5,6,7,8-tetrahydrofolate = 7,8-dihydrofolate + dTMP. Its pathway is cofactor biosynthesis; tetrahydrofolate biosynthesis; 5,6,7,8-tetrahydrofolate from 7,8-dihydrofolate: step 1/1. In terms of biological role, bifunctional enzyme. Involved in de novo dTMP biosynthesis. Key enzyme in folate metabolism. Can play two different roles depending on the source of dihydrofolate: de novo synthesis of tetrahydrofolate or recycling of the dihydrofolate released as one of the end products of the TS catalyzed reaction. Catalyzes an essential reaction for de novo glycine and purine synthesis, DNA precursor synthesis, and for the conversion of dUMP to dTMP. This Oryza sativa subsp. japonica (Rice) protein is Putative bifunctional dihydrofolate reductase-thymidylate synthase.